The primary structure comprises 343 residues: Methionine import ATP-binding protein MetN 1 (343 aa).

The region spanning 2 to 241 is the ABC transporter domain; the sequence is IKLSNITKVF…PKTPLAQKFI (240 aa). 38 to 45 lines the ATP pocket; sequence GASGAGKS.

This sequence belongs to the ABC transporter superfamily. Methionine importer (TC 3.A.1.24) family. In terms of assembly, the complex is composed of two ATP-binding proteins (MetN), two transmembrane proteins (MetI) and a solute-binding protein (MetQ).

It is found in the cell inner membrane. The enzyme catalyses L-methionine(out) + ATP + H2O = L-methionine(in) + ADP + phosphate + H(+). It catalyses the reaction D-methionine(out) + ATP + H2O = D-methionine(in) + ADP + phosphate + H(+). Functionally, part of the ABC transporter complex MetNIQ involved in methionine import. Responsible for energy coupling to the transport system. The chain is Methionine import ATP-binding protein MetN 1 from Salmonella typhimurium (strain LT2 / SGSC1412 / ATCC 700720).